A 565-amino-acid chain; its full sequence is Thiol:disulfide interchange protein DsbD (565 aa).

An N-terminal signal peptide occupies residues 1-19 (MAQRIFTLILLLCSTSVFA). 2 disulfide bridges follow: Cys122–Cys128 and Cys182–Cys304. The next 7 helical transmembrane spans lie at 163–183 (LPFSALWALLIGIGIAFTPCV), 208–228 (LLTFIYVQGMALTYTALGLVV), 243–263 (YVLIGLAIVFTLLAMSMFGLF), 296–316 (IAGLICSPCTTAPLSAILLYI), 323–343 (WLGGGTLYLYALGMGLPLMLI), 357–377 (WMEQVKTAFGFVILALPVFLL), and 384–404 (VWGLRLWSALGVAFFGWAFIT). The region spanning 434-565 (WAFGATHTAQ…FSAHLRDRQP (132 aa)) is the Thioredoxin domain. Residues Cys480 and Cys483 are joined by a disulfide bond.

This sequence belongs to the thioredoxin family. DsbD subfamily.

The protein localises to the cell inner membrane. It catalyses the reaction [protein]-dithiol + NAD(+) = [protein]-disulfide + NADH + H(+). The enzyme catalyses [protein]-dithiol + NADP(+) = [protein]-disulfide + NADPH + H(+). Its function is as follows. Required to facilitate the formation of correct disulfide bonds in some periplasmic proteins and for the assembly of the periplasmic c-type cytochromes. Acts by transferring electrons from cytoplasmic thioredoxin to the periplasm. This transfer involves a cascade of disulfide bond formation and reduction steps. In Shigella boydii serotype 4 (strain Sb227), this protein is Thiol:disulfide interchange protein DsbD.